The primary structure comprises 224 residues: Ribose-5-phosphate isomerase A (224 aa).

Substrate contacts are provided by residues 26–29, 82–85, and 95–98; these read TGST, DGAD, and KGGG. Catalysis depends on Glu-104, which acts as the Proton acceptor. Lys-122 lines the substrate pocket.

It belongs to the ribose 5-phosphate isomerase family. As to quaternary structure, homodimer.

It carries out the reaction aldehydo-D-ribose 5-phosphate = D-ribulose 5-phosphate. The protein operates within carbohydrate degradation; pentose phosphate pathway; D-ribose 5-phosphate from D-ribulose 5-phosphate (non-oxidative stage): step 1/1. Its function is as follows. Catalyzes the reversible conversion of ribose-5-phosphate to ribulose 5-phosphate. The chain is Ribose-5-phosphate isomerase A from Lactococcus lactis subsp. cremoris (strain MG1363).